The chain runs to 401 residues: Nicotinate phosphoribosyltransferase (401 aa).

Histidine 224 is modified (phosphohistidine; by autocatalysis).

Belongs to the NAPRTase family. In terms of processing, transiently phosphorylated on a His residue during the reaction cycle. Phosphorylation strongly increases the affinity for substrates and increases the rate of nicotinate D-ribonucleotide production. Dephosphorylation regenerates the low-affinity form of the enzyme, leading to product release.

The enzyme catalyses nicotinate + 5-phospho-alpha-D-ribose 1-diphosphate + ATP + H2O = nicotinate beta-D-ribonucleotide + ADP + phosphate + diphosphate. It functions in the pathway cofactor biosynthesis; NAD(+) biosynthesis; nicotinate D-ribonucleotide from nicotinate: step 1/1. Its function is as follows. Catalyzes the synthesis of beta-nicotinate D-ribonucleotide from nicotinate and 5-phospho-D-ribose 1-phosphate at the expense of ATP. This Pseudomonas putida (strain ATCC 47054 / DSM 6125 / CFBP 8728 / NCIMB 11950 / KT2440) protein is Nicotinate phosphoribosyltransferase.